The sequence spans 251 residues: Ubiquinone/menaquinone biosynthesis C-methyltransferase UbiE (251 aa).

S-adenosyl-L-methionine is bound by residues T74, D92, and S132.

This sequence belongs to the class I-like SAM-binding methyltransferase superfamily. MenG/UbiE family.

The catalysed reaction is a 2-demethylmenaquinol + S-adenosyl-L-methionine = a menaquinol + S-adenosyl-L-homocysteine + H(+). The enzyme catalyses a 2-methoxy-6-(all-trans-polyprenyl)benzene-1,4-diol + S-adenosyl-L-methionine = a 5-methoxy-2-methyl-3-(all-trans-polyprenyl)benzene-1,4-diol + S-adenosyl-L-homocysteine + H(+). Its pathway is quinol/quinone metabolism; menaquinone biosynthesis; menaquinol from 1,4-dihydroxy-2-naphthoate: step 2/2. It participates in cofactor biosynthesis; ubiquinone biosynthesis. Its function is as follows. Methyltransferase required for the conversion of demethylmenaquinol (DMKH2) to menaquinol (MKH2) and the conversion of 2-polyprenyl-6-methoxy-1,4-benzoquinol (DDMQH2) to 2-polyprenyl-3-methyl-6-methoxy-1,4-benzoquinol (DMQH2). The chain is Ubiquinone/menaquinone biosynthesis C-methyltransferase UbiE from Rubrivivax gelatinosus (strain NBRC 100245 / IL144).